The sequence spans 365 residues: Isopentenyl-diphosphate delta-isomerase (365 aa).

8–9 (RK) contacts substrate. FMN contacts are provided by residues 67–69 (SIT), serine 97, and asparagine 126. A substrate-binding site is contributed by 97–99 (SQR). Glutamine 160 is a substrate binding site. Glutamate 161 serves as a coordination point for Mg(2+). FMN contacts are provided by residues lysine 192, threonine 222, 272–274 (GIR), and 293–294 (AL).

This sequence belongs to the IPP isomerase type 2 family. In terms of assembly, homooctamer. Dimer of tetramers. Requires FMN as cofactor. NADPH serves as cofactor. Mg(2+) is required as a cofactor.

The protein resides in the cytoplasm. The enzyme catalyses isopentenyl diphosphate = dimethylallyl diphosphate. Functionally, involved in the biosynthesis of isoprenoids. Catalyzes the 1,3-allylic rearrangement of the homoallylic substrate isopentenyl (IPP) to its allylic isomer, dimethylallyl diphosphate (DMAPP). This is Isopentenyl-diphosphate delta-isomerase from Methanosarcina mazei (strain ATCC BAA-159 / DSM 3647 / Goe1 / Go1 / JCM 11833 / OCM 88) (Methanosarcina frisia).